The primary structure comprises 257 residues: 1-(5-phosphoribosyl)-5-[(5-phosphoribosylamino)methylideneamino] imidazole-4-carboxamide isomerase (257 aa).

The protein belongs to the HisA/HisF family.

The protein resides in the cytoplasm. The enzyme catalyses 1-(5-phospho-beta-D-ribosyl)-5-[(5-phospho-beta-D-ribosylamino)methylideneamino]imidazole-4-carboxamide = 5-[(5-phospho-1-deoxy-D-ribulos-1-ylimino)methylamino]-1-(5-phospho-beta-D-ribosyl)imidazole-4-carboxamide. The protein operates within amino-acid biosynthesis; L-histidine biosynthesis; L-histidine from 5-phospho-alpha-D-ribose 1-diphosphate: step 4/9. This is 1-(5-phosphoribosyl)-5-[(5-phosphoribosylamino)methylideneamino] imidazole-4-carboxamide isomerase (his-7) from Neurospora crassa (strain ATCC 24698 / 74-OR23-1A / CBS 708.71 / DSM 1257 / FGSC 987).